We begin with the raw amino-acid sequence, 1097 residues long: Translation initiation factor IF-2 (1097 aa).

Residues 79–458 form a disordered region; it reads LEKRVSPQAD…RVIKKKPKKA (380 aa). Residues 97–112 show a composition bias toward basic and acidic residues; the sequence is AKKEASQEKADAHAKL. Positions 157–173 are enriched in low complexity; it reads AATLAVEEAPIAAAPTE. Basic and acidic residues-rich tracts occupy residues 174–190 and 202–221; these read EPMHNSEAELPESKIDS and VEVHLEPKEQEVQELNHAEE. The span at 224–236 shows a compositional bias: low complexity; that stretch reads TPTTEASSEETSA. Polar residues predominate over residues 258 to 267; the sequence is RKTQNTTNVS. Basic and acidic residues predominate over residues 268-286; the sequence is EENKQHEKQPETLKSDKAM. The segment covering 340-363 has biased composition (polar residues); the sequence is SDSLQAEISRQQNEISNRFSQSEN. Basic residues predominate over residues 376–385; sequence HKKKRKRKKN. Over residues 402–443 the composition is skewed to basic and acidic residues; that stretch reads PKQEEKPVKKEKPKEREKPAAGKKEQTPGKKPVREDQKERVL. The 171-residue stretch at 591–761 folds into the tr-type G domain; sequence TRPPVVTIMG…LVEAELLELK (171 aa). Positions 600–607 are G1; that stretch reads GHVDHGKT. Residue 600–607 coordinates GTP; sequence GHVDHGKT. The segment at 625–629 is G2; sequence GITQH. The tract at residues 647–650 is G3; that stretch reads DTPG. Residues 647–651 and 701–704 contribute to the GTP site; these read DTPGH and NKID. Residues 701-704 form a G4 region; it reads NKID. Residues 737–739 form a G5 region; it reads SAK.

This sequence belongs to the TRAFAC class translation factor GTPase superfamily. Classic translation factor GTPase family. IF-2 subfamily.

It is found in the cytoplasm. In terms of biological role, one of the essential components for the initiation of protein synthesis. Protects formylmethionyl-tRNA from spontaneous hydrolysis and promotes its binding to the 30S ribosomal subunits. Also involved in the hydrolysis of GTP during the formation of the 70S ribosomal complex. The sequence is that of Translation initiation factor IF-2 from Chloroherpeton thalassium (strain ATCC 35110 / GB-78).